We begin with the raw amino-acid sequence, 61 residues long: Large ribosomal subunit protein eL37 (61 aa).

Zn(2+) contacts are provided by Cys19, Cys22, Cys34, and Cys37. The C4-type zinc finger occupies 19–37 (CRRCGRNAYNVSKHYCAAC).

Belongs to the eukaryotic ribosomal protein eL37 family. Zn(2+) serves as cofactor.

Its function is as follows. Binds to the 23S rRNA. The protein is Large ribosomal subunit protein eL37 of Saccharolobus islandicus (strain Y.N.15.51 / Yellowstone #2) (Sulfolobus islandicus).